Consider the following 319-residue polypeptide: ATP-dependent 6-phosphofructokinase (319 aa).

ATP is bound at residue glycine 11. ADP contacts are provided by residues 21–25 (RSVVR) and aspartate 59. ATP-binding positions include 72–73 (RC) and 102–105 (GDGS). Aspartate 103 contributes to the Mg(2+) binding site. 125-127 (TID) serves as a coordination point for substrate. The active-site Proton acceptor is aspartate 127. ADP is bound at residue arginine 154. Substrate contacts are provided by residues arginine 162 and 169–171 (MGR). ADP is bound by residues 185–187 (GAE), arginine 211, and 213–215 (KKH). Residues glutamate 222, arginine 243, and 249–252 (HVQR) each bind substrate.

Belongs to the phosphofructokinase type A (PFKA) family. ATP-dependent PFK group I subfamily. Prokaryotic clade 'B1' sub-subfamily. Homotetramer. Mg(2+) is required as a cofactor.

The protein localises to the cytoplasm. It carries out the reaction beta-D-fructose 6-phosphate + ATP = beta-D-fructose 1,6-bisphosphate + ADP + H(+). Its pathway is carbohydrate degradation; glycolysis; D-glyceraldehyde 3-phosphate and glycerone phosphate from D-glucose: step 3/4. Allosterically activated by ADP and other diphosphonucleosides, and allosterically inhibited by phosphoenolpyruvate. Catalyzes the phosphorylation of D-fructose 6-phosphate to fructose 1,6-bisphosphate by ATP, the first committing step of glycolysis. The protein is ATP-dependent 6-phosphofructokinase of Geobacillus stearothermophilus (Bacillus stearothermophilus).